We begin with the raw amino-acid sequence, 504 residues long: Procardosin-A (504 aa).

The signal sequence occupies residues Met-1–Ser-24. Residues Val-25–Arg-68 constitute a propeptide that is removed on maturation. A Peptidase A1 domain is found at Tyr-85–Ala-501. Residue Asp-103 is part of the active site. Cys-116 and Cys-122 are joined by a disulfide. N-linked (GlcNAc...) asparagine glycosylation occurs at Asn-139. The RGD motif motif lies at Arg-246 to Asp-248. A disulfide bond links Cys-277 and Cys-281. Residue Asp-286 is part of the active site. A propeptide spans Gly-310–Ser-414 (plant-specific insert). The Saposin B-type domain maps to Val-311 to Ser-416. Disulfide bonds link Cys-316/Cys-410, Cys-341/Cys-382, Cys-347/Cys-379, and Cys-424/Cys-461. A glycan (N-linked (GlcNAc...) asparagine) is linked at Asn-432. Positions Lys-455–Glu-457 match the KGE motif motif.

Belongs to the peptidase A1 family. Heterodimer of a light chain and a heavy chain. An intermediate form (35 kDa and 30 kDa subunits) is produced first, and undergoes proteolytic processing to remove the internal plant-specific insert (PSI) and the propeptide. There is some heterogeniety at the cleavage site. Interacts (via RGD or KGE motifs) with PLD1 (via C2 domain). Post-translationally, N-glycosylated. Glycans found at Asn-139 include approximately 6% oligomannose, 82% oligosaccharides of the plant modified type with proximal fucose but without xylose and 6% oligosaccharides of the plant modified type with proximal fucose and xylose. Glycans found at Asn-432 include 14% oligosaccharides of the plant modified type with proximal fucose but without xylose and 86% oligosaccharides of the plant modified type with proximal fucose and xylose. Detected only in pistils, not in seeds, roots, midribs, bracts, stamens, pollen, vascular or supporting tissues. Detected in seeds. High amounts are detected in the broad outer region of the upper portion of the stigma, towards the lower portion of the stigma it accumulates at the periphery. Within the stigma, expressed mainly in the epidermic papillae, lower levels are found in the cortical parenchyma. Present mainly in epidermal cells within the stye (at protein level). Expressed in young flower buds, and at lower levels in seeds, pollen and bracteas, but not in roots or leaves.

Its subcellular location is the microsome membrane. It localises to the protein storage vacuole. The protein resides in the secreted. The protein localises to the cell wall. It is found in the extracellular space. Its subcellular location is the extracellular matrix. Inhibited by the specific aspartic proteinase inhibitors diazoacetyl-noleucine methyl ester and pepstatin. Aspartic proteinase with a high preference for bonds between hydrophobic residues. Cleaves alpha-lactalbumin but not beta-lactoglobulin. The protein is Procardosin-A of Cynara cardunculus (Cardoon).